The following is a 554-amino-acid chain: Glutamine--tRNA ligase (554 aa).

Positions 34-44 match the 'HIGH' region motif; sequence PEPNGYLHIGH. Residues 35-37 and 41-47 each bind ATP; these read EPN and HIGHAKS. L-glutamine contacts are provided by Asp-67 and Tyr-212. Residues Thr-231, 261-262, and 269-271 contribute to the ATP site; these read RL and MSK. Residues 268 to 272 carry the 'KMSKS' region motif; it reads VMSKR. Positions 317-324 are interaction with tRNA; that stretch reads TKQDNTIE.

The protein belongs to the class-I aminoacyl-tRNA synthetase family. In terms of assembly, monomer.

It localises to the cytoplasm. The enzyme catalyses tRNA(Gln) + L-glutamine + ATP = L-glutaminyl-tRNA(Gln) + AMP + diphosphate. This chain is Glutamine--tRNA ligase, found in Shigella boydii serotype 18 (strain CDC 3083-94 / BS512).